The primary structure comprises 221 residues: MVHEAPHASSFQMLLQLLLLLLLRAEPLRSAELTFELPDNAKQCFHEEVEQGVKFSLDYQVITGGHYDVDCYVEDPRGNVIYRETKKQYDSFTYKTEAKGVYRFCFSNEFSTFSHKTVYFDFQVGDEPPILPDMGNRVTALTQMESACVTIHEALKTVIDSQTHYRLREAQDRARAEDLNSRVSYWSVGETIALFVVSFSQVLLLKSFFTEKRPVNRAVHS.

A signal peptide spans 1-25 (MVHEAPHASSFQMLLQLLLLLLLRA). Residues 28–184 (LRSAELTFEL…RAEDLNSRVS (157 aa)) lie on the Lumenal side of the membrane. Positions 42–124 (KQCFHEEVEQ…HKTVYFDFQV (83 aa)) constitute a GOLD domain. Arg-103 is modified (dimethylated arginine). The helical transmembrane segment at 185–205 (YWSVGETIALFVVSFSQVLLL) threads the bilayer. Residues 206-221 (KSFFTEKRPVNRAVHS) are Cytoplasmic-facing. Residues 208-209 (FF) carry the COPII vesicle coat-binding motif. A COPI vesicle coat-binding motif is present at residues 208–221 (FFTEKRPVNRAVHS).

Belongs to the EMP24/GP25L family. In terms of assembly, monomer in endoplasmic reticulum, endoplasmic reticulum-Golgi intermediate compartment and cis-Golgi network. Interacts (via C-terminus) with COPG1; the interaction involves dimeric TMED3; however, there are conflicting reports on the interaction. Interacts with GORASP1 and GORASP2.

The protein resides in the endoplasmic reticulum-Golgi intermediate compartment membrane. It is found in the golgi apparatus. It localises to the cis-Golgi network membrane. Its subcellular location is the golgi stack membrane. The protein localises to the endoplasmic reticulum membrane. The protein resides in the cytoplasmic vesicle. It is found in the COPI-coated vesicle membrane. Potential role in vesicular protein trafficking, mainly in the early secretory pathway. Contributes to the coupled localization of TMED2 and TMED10 in the cis-Golgi network. The protein is Transmembrane emp24 domain-containing protein 3 (Tmed3) of Mus musculus (Mouse).